The chain runs to 110 residues: UPF0122 protein Sca_0859 (110 aa).

Belongs to the UPF0122 family.

Might take part in the signal recognition particle (SRP) pathway. This is inferred from the conservation of its genetic proximity to ftsY/ffh. May be a regulatory protein. The protein is UPF0122 protein Sca_0859 of Staphylococcus carnosus (strain TM300).